Consider the following 180-residue polypeptide: NADH-quinone oxidoreductase subunit I (180 aa).

4Fe-4S ferredoxin-type domains lie at 50–80 and 90–119; these read LTRN…LQKS and KFFR…LMPD. Cys-60, Cys-63, Cys-66, Cys-70, Cys-99, Cys-102, Cys-105, and Cys-109 together coordinate [4Fe-4S] cluster.

It belongs to the complex I 23 kDa subunit family. As to quaternary structure, NDH-1 is composed of 13 different subunits. Subunits NuoA, H, J, K, L, M, N constitute the membrane sector of the complex. It depends on [4Fe-4S] cluster as a cofactor.

Its subcellular location is the cell membrane. It carries out the reaction a quinone + NADH + 5 H(+)(in) = a quinol + NAD(+) + 4 H(+)(out). NDH-1 shuttles electrons from NADH, via FMN and iron-sulfur (Fe-S) centers, to quinones in the respiratory chain. The immediate electron acceptor for the enzyme in this species is believed to be ubiquinone. Couples the redox reaction to proton translocation (for every two electrons transferred, four hydrogen ions are translocated across the cytoplasmic membrane), and thus conserves the redox energy in a proton gradient. In Buchnera aphidicola subsp. Acyrthosiphon pisum (strain APS) (Acyrthosiphon pisum symbiotic bacterium), this protein is NADH-quinone oxidoreductase subunit I.